A 684-amino-acid polypeptide reads, in one-letter code: Acetophenone carboxylase delta subunit (684 aa).

This sequence belongs to the oxoprolinase family. In terms of assembly, acetophenone carboxylase consists of five subunits; a heterooctameric subcomplex of two alpha (Apc1), two beta (Apc2), two gamma (Apc3) and two delta (Apc4) subunits assembles with the epsilon (Apc5) subunit in an unknown stoichiometry. It depends on Mg(2+) as a cofactor. Mn(2+) serves as cofactor.

Its subcellular location is the cytoplasm. It carries out the reaction acetophenone + hydrogencarbonate + 2 ATP + H2O = 3-oxo-3-phenylpropanoate + 2 ADP + 2 phosphate + 2 H(+). Its activity is regulated as follows. Inhibited by zinc ions, carbamoylphosphate and beta,gamma-imido-ATP. Functionally, catalyzes the carboxylation of acetophenone to form 3-oxo-3-phenylpropanoate (benzoylacetate) in the anaerobic catabolism of ethylbenzene. Also carboxylates propiophenone at the same rate and 4-acetyl-pyridine at lower rates. The sequence is that of Acetophenone carboxylase delta subunit (apc4) from Aromatoleum aromaticum (strain DSM 19018 / LMG 30748 / EbN1) (Azoarcus sp. (strain EbN1)).